A 249-amino-acid polypeptide reads, in one-letter code: Undecaprenyl-diphosphatase (249 aa).

A run of 8 helical transmembrane segments spans residues G11–F31, P35–V55, L80–S100, V101–L121, I135–I155, F180–F200, T202–V222, and V226–L246.

Belongs to the UppP family.

Its subcellular location is the cell membrane. It catalyses the reaction di-trans,octa-cis-undecaprenyl diphosphate + H2O = di-trans,octa-cis-undecaprenyl phosphate + phosphate + H(+). In terms of biological role, catalyzes the dephosphorylation of undecaprenyl diphosphate (UPP). The sequence is that of Undecaprenyl-diphosphatase from Methanococcus maripaludis (strain C6 / ATCC BAA-1332).